We begin with the raw amino-acid sequence, 610 residues long: Elongation factor 4 (610 aa).

The 183-residue stretch at 11 to 193 folds into the tr-type G domain; it reads EKIRNFSIIA…QIVEKVPAPT (183 aa). GTP contacts are provided by residues 23–28 and 140–143; these read DHGKST and NKID.

It belongs to the TRAFAC class translation factor GTPase superfamily. Classic translation factor GTPase family. LepA subfamily.

Its subcellular location is the cell membrane. It catalyses the reaction GTP + H2O = GDP + phosphate + H(+). Its function is as follows. Required for accurate and efficient protein synthesis under certain stress conditions. May act as a fidelity factor of the translation reaction, by catalyzing a one-codon backward translocation of tRNAs on improperly translocated ribosomes. Back-translocation proceeds from a post-translocation (POST) complex to a pre-translocation (PRE) complex, thus giving elongation factor G a second chance to translocate the tRNAs correctly. Binds to ribosomes in a GTP-dependent manner. In Streptococcus pyogenes serotype M1, this protein is Elongation factor 4.